The chain runs to 403 residues: Phosphopentomutase (403 aa).

Asp-13, Asp-298, His-303, Asp-339, His-340, and His-351 together coordinate Mn(2+).

The protein belongs to the phosphopentomutase family. Mn(2+) is required as a cofactor.

Its subcellular location is the cytoplasm. The catalysed reaction is 2-deoxy-alpha-D-ribose 1-phosphate = 2-deoxy-D-ribose 5-phosphate. It carries out the reaction alpha-D-ribose 1-phosphate = D-ribose 5-phosphate. The protein operates within carbohydrate degradation; 2-deoxy-D-ribose 1-phosphate degradation; D-glyceraldehyde 3-phosphate and acetaldehyde from 2-deoxy-alpha-D-ribose 1-phosphate: step 1/2. Functionally, isomerase that catalyzes the conversion of deoxy-ribose 1-phosphate (dRib-1-P) and ribose 1-phosphate (Rib-1-P) to deoxy-ribose 5-phosphate (dRib-5-P) and ribose 5-phosphate (Rib-5-P), respectively. The chain is Phosphopentomutase from Streptococcus pneumoniae serotype 2 (strain D39 / NCTC 7466).